Consider the following 523-residue polypeptide: Bifunctional purine biosynthesis protein PurH (523 aa).

One can recognise an MGS-like domain in the interval 1-154 (MTATAGSNKR…KNHPSVAVVT (154 aa)).

Belongs to the PurH family.

It catalyses the reaction (6R)-10-formyltetrahydrofolate + 5-amino-1-(5-phospho-beta-D-ribosyl)imidazole-4-carboxamide = 5-formamido-1-(5-phospho-D-ribosyl)imidazole-4-carboxamide + (6S)-5,6,7,8-tetrahydrofolate. The catalysed reaction is IMP + H2O = 5-formamido-1-(5-phospho-D-ribosyl)imidazole-4-carboxamide. It functions in the pathway purine metabolism; IMP biosynthesis via de novo pathway; 5-formamido-1-(5-phospho-D-ribosyl)imidazole-4-carboxamide from 5-amino-1-(5-phospho-D-ribosyl)imidazole-4-carboxamide (10-formyl THF route): step 1/1. The protein operates within purine metabolism; IMP biosynthesis via de novo pathway; IMP from 5-formamido-1-(5-phospho-D-ribosyl)imidazole-4-carboxamide: step 1/1. The polypeptide is Bifunctional purine biosynthesis protein PurH (Streptomyces coelicolor (strain ATCC BAA-471 / A3(2) / M145)).